The chain runs to 129 residues: Lysozyme C (129 aa).

Residues Lys1–Leu129 form the C-type lysozyme domain. Cystine bridges form between Cys6/Cys127, Cys30/Cys115, Cys64/Cys80, and Cys76/Cys94. Catalysis depends on residues Glu35 and Asp52.

The protein belongs to the glycosyl hydrolase 22 family. As to quaternary structure, monomer.

The protein resides in the secreted. It carries out the reaction Hydrolysis of (1-&gt;4)-beta-linkages between N-acetylmuramic acid and N-acetyl-D-glucosamine residues in a peptidoglycan and between N-acetyl-D-glucosamine residues in chitodextrins.. Lysozymes have primarily a bacteriolytic function; those in tissues and body fluids are associated with the monocyte-macrophage system and enhance the activity of immunoagents. This is Lysozyme C (LYZ) from Callipepla californica (California quail).